The sequence spans 129 residues: Cytochrome c oxidase subunit 5B, mitochondrial (129 aa).

The N-terminal 31 residues, 1–31, are a transit peptide targeting the mitochondrion; that stretch reads MASRLLRGAGALAAQTLRARGPNGVAVVRSM. 2 positions are modified to N6-acetyllysine: K68 and K86. Zn(2+) is bound by residues C91, C93, C113, and C116. K121 bears the N6-acetyllysine mark.

It belongs to the cytochrome c oxidase subunit 5B family. As to quaternary structure, component of the cytochrome c oxidase (complex IV, CIV), a multisubunit enzyme composed of 14 subunits. The complex is composed of a catalytic core of 3 subunits MT-CO1, MT-CO2 and MT-CO3, encoded in the mitochondrial DNA, and 11 supernumerary subunits COX4I, COX5A, COX5B, COX6A, COX6B, COX6C, COX7A, COX7B, COX7C, COX8 and NDUFA4, which are encoded in the nuclear genome. The complex exists as a monomer or a dimer and forms supercomplexes (SCs) in the inner mitochondrial membrane with NADH-ubiquinone oxidoreductase (complex I, CI) and ubiquinol-cytochrome c oxidoreductase (cytochrome b-c1 complex, complex III, CIII), resulting in different assemblies (supercomplex SCI(1)III(2)IV(1) and megacomplex MCI(2)III(2)IV(2)).

It localises to the mitochondrion inner membrane. Its pathway is energy metabolism; oxidative phosphorylation. Its function is as follows. Component of the cytochrome c oxidase, the last enzyme in the mitochondrial electron transport chain which drives oxidative phosphorylation. The respiratory chain contains 3 multisubunit complexes succinate dehydrogenase (complex II, CII), ubiquinol-cytochrome c oxidoreductase (cytochrome b-c1 complex, complex III, CIII) and cytochrome c oxidase (complex IV, CIV), that cooperate to transfer electrons derived from NADH and succinate to molecular oxygen, creating an electrochemical gradient over the inner membrane that drives transmembrane transport and the ATP synthase. Cytochrome c oxidase is the component of the respiratory chain that catalyzes the reduction of oxygen to water. Electrons originating from reduced cytochrome c in the intermembrane space (IMS) are transferred via the dinuclear copper A center (CU(A)) of subunit 2 and heme A of subunit 1 to the active site in subunit 1, a binuclear center (BNC) formed by heme A3 and copper B (CU(B)). The BNC reduces molecular oxygen to 2 water molecules using 4 electrons from cytochrome c in the IMS and 4 protons from the mitochondrial matrix. The chain is Cytochrome c oxidase subunit 5B, mitochondrial (COX5B) from Sus scrofa (Pig).